The sequence spans 1409 residues: DNA-directed RNA polymerase subunit beta' (1409 aa).

C69, C71, C84, and C87 together coordinate Zn(2+). The Mg(2+) site is built by D461, D463, and D465. Zn(2+)-binding residues include C805, C879, C886, and C889.

Belongs to the RNA polymerase beta' chain family. As to quaternary structure, the RNAP catalytic core consists of 2 alpha, 1 beta, 1 beta' and 1 omega subunit. When a sigma factor is associated with the core the holoenzyme is formed, which can initiate transcription. Requires Mg(2+) as cofactor. It depends on Zn(2+) as a cofactor.

The catalysed reaction is RNA(n) + a ribonucleoside 5'-triphosphate = RNA(n+1) + diphosphate. In terms of biological role, DNA-dependent RNA polymerase catalyzes the transcription of DNA into RNA using the four ribonucleoside triphosphates as substrates. The sequence is that of DNA-directed RNA polymerase subunit beta' from Anaplasma phagocytophilum (strain HZ).